Reading from the N-terminus, the 164-residue chain is Thiol peroxidase (164 aa).

A Thioredoxin domain is found at 18–164 (KKVGDSAPDF…YEAVLSHLNK (147 aa)). Residue Cys60 is the Cysteine sulfenic acid (-SOH) intermediate of the active site. A disulfide bond links Cys60 and Cys94.

Belongs to the peroxiredoxin family. Tpx subfamily. Homodimer.

The catalysed reaction is a hydroperoxide + [thioredoxin]-dithiol = an alcohol + [thioredoxin]-disulfide + H2O. Its function is as follows. Thiol-specific peroxidase that catalyzes the reduction of hydrogen peroxide and organic hydroperoxides to water and alcohols, respectively. Plays a role in cell protection against oxidative stress by detoxifying peroxides. The sequence is that of Thiol peroxidase from Oceanobacillus iheyensis (strain DSM 14371 / CIP 107618 / JCM 11309 / KCTC 3954 / HTE831).